Consider the following 180-residue polypeptide: Ribosome-recycling factor (180 aa).

This sequence belongs to the RRF family.

It is found in the cytoplasm. Responsible for the release of ribosomes from messenger RNA at the termination of protein biosynthesis. May increase the efficiency of translation by recycling ribosomes from one round of translation to another. The chain is Ribosome-recycling factor from Chlamydia felis (strain Fe/C-56) (Chlamydophila felis).